A 439-amino-acid chain; its full sequence is MDLLGDIVEKDTSDSVESNDNGTLSTNNCGTGFPELYKPKKISSWKERLREKRAQKKKTSGKDAEKQQTSTDAPLSEAKSIHNENIKVLQGMSDEQIVQEREDLYNSLDPKLIAKLLKNINKRAKDENNTPLFAEIEGASGTWVGGNKQGIYDLPPLDDEDVDVALEIRPMLGKDAKHVQFEEAGKEKDVEEEAKTNDDVDDIAPLDFQMAQCIDHMKNEELFKDVHFIKEESQNEINLEKLDINDPNFNDKLHEKYFPDLPKEVDKLKWMQPVQQKTDKNYIIEDVSECRFDFNGDLVPPTRQIDSTIHSGLHHHSDSPELAGYTIVELEHLARSTFPSQRCIAIQTLGRILYKLGQKSYYQLVPEIDADTYKEDGSISNVMDKIYSMFWDLIKDGKVIESLEISSDEKFTRNLSVRNYAIDALWLWKQGGGDFRTKK.

Disordered regions lie at residues 1–35 (MDLLGDIVEKDTSDSVESNDNGTLSTNNCGTGFPE) and 49–79 (LREKRAQKKKTSGKDAEKQQTSTDAPLSEAK). Over residues 15 to 30 (SVESNDNGTLSTNNCG) the composition is skewed to polar residues.

It belongs to the RPAP1 family.

The protein localises to the cytoplasm. In terms of biological role, forms an interface between the RNA polymerase II enzyme and chaperone/scaffolding proteins, suggesting that it is required to connect RNA polymerase II to regulators of protein complex formation. The protein is RNA polymerase II-associated protein RBA50 (RBA50) of Saccharomyces cerevisiae (strain ATCC 204508 / S288c) (Baker's yeast).